The chain runs to 255 residues: Acetylglutamate kinase (255 aa).

Substrate is bound by residues 40–41 (GG), Arg62, and Asn153.

This sequence belongs to the acetylglutamate kinase family. ArgB subfamily.

The protein resides in the cytoplasm. The catalysed reaction is N-acetyl-L-glutamate + ATP = N-acetyl-L-glutamyl 5-phosphate + ADP. Its pathway is amino-acid biosynthesis; L-arginine biosynthesis; N(2)-acetyl-L-ornithine from L-glutamate: step 2/4. In terms of biological role, catalyzes the ATP-dependent phosphorylation of N-acetyl-L-glutamate. The chain is Acetylglutamate kinase from Bacillus cereus (strain B4264).